We begin with the raw amino-acid sequence, 860 residues long: Leucine--tRNA ligase (860 aa).

A 'HIGH' region motif is present at residues 42 to 52 (PYPSGRLHMGH). The 'KMSKS' region motif lies at 619–623 (KMSKS). Lys622 contributes to the ATP binding site.

This sequence belongs to the class-I aminoacyl-tRNA synthetase family.

The protein resides in the cytoplasm. It catalyses the reaction tRNA(Leu) + L-leucine + ATP = L-leucyl-tRNA(Leu) + AMP + diphosphate. The sequence is that of Leucine--tRNA ligase from Erwinia tasmaniensis (strain DSM 17950 / CFBP 7177 / CIP 109463 / NCPPB 4357 / Et1/99).